A 533-amino-acid chain; its full sequence is Di/tripeptide-binding protein 4 (533 aa).

The first 25 residues, 1-25 (MLHPLLRHLPLALALALCAAGAAQA), serve as a signal peptide directing secretion.

It belongs to the bacterial solute-binding protein 5 family. As to quaternary structure, the complex is composed of two ATP-binding proteins (DppD and DppF), two transmembrane proteins (DppB and DppC) and a solute-binding protein (DppA4). Five orthologous SBPs (DppA1-A5) are present in P.aeruginosa, which increases the substrate specificity of the DppBCDF transporter.

Its function is as follows. Part of the ABC transporter DppABCDF involved in the uptake of various di/tripeptides. Prefers dipeptides with acidic residues at the C-terminal end. Efficiently uses tripeptides. This Pseudomonas aeruginosa (strain UCBPP-PA14) protein is Di/tripeptide-binding protein 4.